Consider the following 272-residue polypeptide: Type III pantothenate kinase (272 aa).

6–13 (DVRNTHTV) serves as a coordination point for ATP. Substrate is bound at residue 109–112 (GADR). The active-site Proton acceptor is Asp111. Residue Asp131 coordinates K(+). Ser134 provides a ligand contact to ATP. A substrate-binding site is contributed by Thr186.

The protein belongs to the type III pantothenate kinase family. Homodimer. NH4(+) serves as cofactor. It depends on K(+) as a cofactor.

It is found in the cytoplasm. The catalysed reaction is (R)-pantothenate + ATP = (R)-4'-phosphopantothenate + ADP + H(+). It functions in the pathway cofactor biosynthesis; coenzyme A biosynthesis; CoA from (R)-pantothenate: step 1/5. Catalyzes the phosphorylation of pantothenate (Pan), the first step in CoA biosynthesis. This is Type III pantothenate kinase from Mycobacterium ulcerans (strain Agy99).